The following is a 549-amino-acid chain: CTP synthase (549 aa).

The tract at residues 1-267 (MAKFVFITGG…CREVLDVLQL (267 aa)) is amidoligase domain. CTP is bound at residue S13. S13 lines the UTP pocket. Residues 14–19 (SIGKGI) and D71 contribute to the ATP site. D71 and E141 together coordinate Mg(2+). CTP is bound by residues 148–150 (DIE), 188–193 (KTKPTQ), and K224. Residues 188-193 (KTKPTQ) and K224 each bind UTP. The Glutamine amidotransferase type-1 domain occupies 292–534 (KVALVGKYVQ…IEAAQQRLPD (243 aa)). Residue G354 coordinates L-glutamine. C381 functions as the Nucleophile; for glutamine hydrolysis in the catalytic mechanism. L-glutamine-binding positions include 382-385 (LGMQ), E405, and R462. Active-site residues include H507 and E509.

It belongs to the CTP synthase family. In terms of assembly, homotetramer.

It carries out the reaction UTP + L-glutamine + ATP + H2O = CTP + L-glutamate + ADP + phosphate + 2 H(+). The enzyme catalyses L-glutamine + H2O = L-glutamate + NH4(+). It catalyses the reaction UTP + NH4(+) + ATP = CTP + ADP + phosphate + 2 H(+). It participates in pyrimidine metabolism; CTP biosynthesis via de novo pathway; CTP from UDP: step 2/2. With respect to regulation, allosterically activated by GTP, when glutamine is the substrate; GTP has no effect on the reaction when ammonia is the substrate. The allosteric effector GTP functions by stabilizing the protein conformation that binds the tetrahedral intermediate(s) formed during glutamine hydrolysis. Inhibited by the product CTP, via allosteric rather than competitive inhibition. Its function is as follows. Catalyzes the ATP-dependent amination of UTP to CTP with either L-glutamine or ammonia as the source of nitrogen. Regulates intracellular CTP levels through interactions with the four ribonucleotide triphosphates. This chain is CTP synthase, found in Synechococcus sp. (strain CC9902).